The chain runs to 530 residues: Probable flavin-containing monooxygenase 1 (530 aa).

FAD is bound by residues 17–21 (GAGVS), E38, 46–47 (VW), and 58–59 (QS). 219-222 (SAID) is an NADP(+) binding site.

Belongs to the FMO family. FAD serves as cofactor.

In terms of biological role, required for the establishment of systemic acquired resistance (SAR). Not involved in local defense mechanisms. Confers a salicylic acid-dependent (SA) resistance to virulent pathogens such as P.syringae pv tomato and H.parasitica. The sequence is that of Probable flavin-containing monooxygenase 1 (FMO1) from Arabidopsis thaliana (Mouse-ear cress).